The primary structure comprises 421 residues: ATP-dependent RNA helicase RhlB (421 aa).

Residues 9-37 (QKFSDFSLHPKVVEALEKKGFHNCTPIQA) carry the Q motif motif. The Helicase ATP-binding domain occupies 40–219 (LPLTLAGRDV…FEQMNNAEYI (180 aa)). Residue 53–60 (AQTGTGKT) coordinates ATP. The DEAD box signature appears at 165 to 168 (DEAD). The Helicase C-terminal domain maps to 245–390 (RLLQTLIEEE…VSKYNPDALM (146 aa)). The segment at 392–421 (DLPKPLRLTRPRTGNGPRRTGAPRNRRRSG) is disordered. Residues 402–414 (PRTGNGPRRTGAP) show a composition bias toward low complexity.

This sequence belongs to the DEAD box helicase family. RhlB subfamily. As to quaternary structure, component of the RNA degradosome, which is a multiprotein complex involved in RNA processing and mRNA degradation.

Its subcellular location is the cytoplasm. The enzyme catalyses ATP + H2O = ADP + phosphate + H(+). Its function is as follows. DEAD-box RNA helicase involved in RNA degradation. Has RNA-dependent ATPase activity and unwinds double-stranded RNA. The polypeptide is ATP-dependent RNA helicase RhlB (Shigella dysenteriae serotype 1 (strain Sd197)).